A 588-amino-acid chain; its full sequence is MRTNYCGLIDVQYLDQTVILYGWVHRRRDHGGVIFVDLRDREGLVQVVCDPDNPTAFQVAEKIRNEFVVRITGRVRHRPPGTVNPNLISGEIEVLVSSIDILNASLTPPFLMDDESLSEATRLEHRYLDLRRPQMQENLRLRYKVAMAVRLFLDQHGFIDVETPMLTKSTPEGARDYLVPSRVNTGHFFALPQSPQLFKQLLMVSGFDRYYQITKCFRDEDLRADRQPEFTQIDIETSFLNESQIMQMMERMICTVFKSVRNIDLPTPFPRLTHGEAMSKYGSDKPDMRVSLVLTELTDVMQEVEFKVFREAALRTGGRVAALRVPGGGALSRKEIDDYTGFVAIYGAKGLAYIKVNALEKGMDGLQSPILKFLPENVIQIVLERTGAKDGDLIFFGADKAQVVNEALGALRAKVGHDRGLAESGWKPLWVVDFPMFERDEEENRWKALHHPFTSPAEGHEDLLETDPEKALSKAYDMVLNGSEIGGGSVRIHRQEVQSKVFRALNIGADEANEKFGFLLEALQYGAPPHGGIAFGLDRIVAMMAGAESIREVIAFPKTQRAQCLLTHAPSTVGEKQLRELHIKLRHA.

Glutamate 172 is a binding site for L-aspartate. The segment at 196–199 is aspartate; sequence QLFK. Arginine 218 lines the L-aspartate pocket. ATP-binding positions include 218-220 and glutamine 227; that span reads RDE. Histidine 450 provides a ligand contact to L-aspartate. Glutamate 484 provides a ligand contact to ATP. L-aspartate is bound at residue arginine 491. 536–539 is an ATP binding site; the sequence is GLDR.

The protein belongs to the class-II aminoacyl-tRNA synthetase family. Type 1 subfamily. As to quaternary structure, homodimer.

It is found in the cytoplasm. It catalyses the reaction tRNA(Asx) + L-aspartate + ATP = L-aspartyl-tRNA(Asx) + AMP + diphosphate. Aspartyl-tRNA synthetase with relaxed tRNA specificity since it is able to aspartylate not only its cognate tRNA(Asp) but also tRNA(Asn). Reaction proceeds in two steps: L-aspartate is first activated by ATP to form Asp-AMP and then transferred to the acceptor end of tRNA(Asp/Asn). The chain is Aspartate--tRNA(Asp/Asn) ligase from Nitrosospira multiformis (strain ATCC 25196 / NCIMB 11849 / C 71).